Here is a 640-residue protein sequence, read N- to C-terminus: MPAITLPDGSVRDYPGPVTGTEIAASIGPGLAKAALAMEVDGKMMDLSRTLDADARLRFITRRDADSLELIRHDAAHVMAEAVQALYPGTQVTIGPAIEGGFYYDFFRNEPFTPDDLPAIEAKMREIIAANAPFTREVWDRDEAIRFFEARGERFKAELIRDLPASETITIYRQGDWLDLCRGPHMRGTGDIGGAFKLTKVAGAYWRGDHRNPMLSRIYGTAWRDQKELDAHLKQLEEAERRDHRKIGRQMDLFHMQEEAVGSVFWHEKGWRLYRTVEAYMRRRQEEFGYIEVRTPQLLDRKLWEASGHWDNYRSHMFIAEVEDEDKVLAVKPMNCPCHVQIFNHGLRSYRELPLRMAEFGACHRYEPSGALHGIMRVRAFAQDDAHIFCTEDQIADETVRFVEMLRRVYADFGFPEFAVKFADRPTPRSGSDEVWDKAEAALRSACETAGVEFTVNPGEGAFYGPKLEFVLRDAIGRDWQCGTLQVDFVLPERLDASYVTAESGRARPVMLHRAIVGSFERFIGILIENCAGRFPLWLAPTQAAVASIVTDANDYAETVAARLKEAGLAVATDTRNEKINAKVRDLSLALVPNILVVGRREAEQQTVSIRRLGSDKQDSMTLDEAIATLKAEATPPDLR.

One can recognise a TGS domain in the interval 1 to 61; the sequence is MPAITLPDGS…DADARLRFIT (61 aa). The interval 243–536 is catalytic; that stretch reads DHRKIGRQMD…LIENCAGRFP (294 aa). Zn(2+)-binding residues include Cys336, His387, and His513.

This sequence belongs to the class-II aminoacyl-tRNA synthetase family. Homodimer. The cofactor is Zn(2+).

The protein resides in the cytoplasm. The enzyme catalyses tRNA(Thr) + L-threonine + ATP = L-threonyl-tRNA(Thr) + AMP + diphosphate + H(+). In terms of biological role, catalyzes the attachment of threonine to tRNA(Thr) in a two-step reaction: L-threonine is first activated by ATP to form Thr-AMP and then transferred to the acceptor end of tRNA(Thr). Also edits incorrectly charged L-seryl-tRNA(Thr). The sequence is that of Threonine--tRNA ligase from Acidiphilium cryptum (strain JF-5).